The following is a 410-amino-acid chain: MAMAWLMGLGLALASVLWVELVRDCYHALAHVWSPLYRLHGWHHRVFRSDLSVVSTEIYQKAHWYNDVPEALVMLAFGIWPPLLTWMWQGFSQWPLILAASAGMVYTLGFLLSAIARGVGLPNADEITDLTHRPGPFLTPPAPWMVNRTYHWRHHFDDPNAYFCGTLTLVDKMLGTALSLKGKKIAVTGASGGFGQALLQELHQQGAKAIAITSCGQEVTVIGAEKTIPIRTEQWCIGQEDQLKDLLAEIDVLVINHGVNVHQRRDGQAIQEAYEVNTFSALRLMELFLATVKTNRHIATKEIWVNTSEAEVNPAFSPLYELSKRALGDVVTLKRLDSPCVIRKLILGPFKSKLNPVGIMSAAWVARQVVKGVKRDSRNIIVTINPITFIAFPVKEFFVSLYFRCFTKKS.

The first 14 residues, 1–14 (MAMAWLMGLGLALA), serve as a signal peptide directing secretion. 2 helical membrane passes run 71–91 (ALVM…WQGF) and 96–116 (LILA…SAIA). Catalysis depends on Tyr320, which acts as the Proton acceptor. Residues 380-400 (IIVTINPITFIAFPVKEFFVS) form a helical membrane-spanning segment.

It belongs to the short-chain dehydrogenases/reductases (SDR) family.

The protein resides in the membrane. It catalyses the reaction a 1,2-diacyl-3-O-(beta-D-glucopyranosyl)-sn-glycerol = a 1,2-diacyl-3-O-(beta-D-galactosyl)-sn-glycerol. Functionally, involved in the biosynthesis of galactolipids found in the photosynthetic membranes. Catalyzes the isomerization of monoglucosyldiacylglycerol (GlcDG) to yield monogalactosyldiacylglycerol (MGDG). This is Monoglucosyldiacylglycerol epimerase from Synechocystis sp. (strain ATCC 27184 / PCC 6803 / Kazusa).